We begin with the raw amino-acid sequence, 424 residues long: 3-phosphoshikimate 1-carboxyvinyltransferase (424 aa).

3-phosphoshikimate contacts are provided by K21, S22, and R26. A phosphoenolpyruvate-binding site is contributed by K21. Phosphoenolpyruvate contacts are provided by G92 and R120. Residues S163, S164, Q165, S191, D306, and K333 each contribute to the 3-phosphoshikimate site. Phosphoenolpyruvate is bound at residue Q165. D306 (proton acceptor) is an active-site residue. R337, R379, and K405 together coordinate phosphoenolpyruvate.

The protein belongs to the EPSP synthase family. In terms of assembly, monomer.

It localises to the cytoplasm. It carries out the reaction 3-phosphoshikimate + phosphoenolpyruvate = 5-O-(1-carboxyvinyl)-3-phosphoshikimate + phosphate. Its pathway is metabolic intermediate biosynthesis; chorismate biosynthesis; chorismate from D-erythrose 4-phosphate and phosphoenolpyruvate: step 6/7. In terms of biological role, catalyzes the transfer of the enolpyruvyl moiety of phosphoenolpyruvate (PEP) to the 5-hydroxyl of shikimate-3-phosphate (S3P) to produce enolpyruvyl shikimate-3-phosphate and inorganic phosphate. The polypeptide is 3-phosphoshikimate 1-carboxyvinyltransferase (Clostridium perfringens (strain 13 / Type A)).